Here is a 324-residue protein sequence, read N- to C-terminus: DTVLLNRISHDNAQLLAIVFNENVIGKAYTGGMCDPRYSVGVVMDHSPINRLVADTMAHEMGHNLGIHHDTGSCSCGGHSCIMSRVISHQPLQYFSNCSYIEYWDFITKLNPQCILNEPLRTDIVSPPVCGNELLEMGEECDCGSPRNCRDLCCDAATCKLHSWVECESGECCDQCRFIKAGNVCRPPRKECDVAEACTGQSAQCPTDDFKRNGQPCLNNYAYCYQGNCPIMYHQCYALFGSDATMAQDSCFQVNKKGNEYFYCRLENGINIPCAQEDVKCGRLFCHNMKYEQDCNYSDRGMVDNGTKCAEGKVCNSNRQAYQR.

Residues 1–119 (DTVLLNRISH…LNPQCILNEP (119 aa)) enclose the Peptidase M12B domain. Residue aspartate 11 coordinates Ca(2+). Disulfide bonds link cysteine 34/cysteine 114, cysteine 74/cysteine 98, and cysteine 76/cysteine 81. Zn(2+) is bound at residue histidine 59. Glutamate 60 is a catalytic residue. Positions 63 and 69 each coordinate Zn(2+). A glycan (N-linked (GlcNAc...) asparagine) is linked at asparagine 97. Ca(2+) contacts are provided by cysteine 114, asparagine 117, valine 129, asparagine 132, leucine 134, glutamate 136, glutamate 139, and aspartate 142. The 87-residue stretch at 127–213 (PPVCGNELLE…QCPTDDFKRN (87 aa)) folds into the Disintegrin domain. Disulfide bonds link cysteine 130/cysteine 159, cysteine 141/cysteine 154, cysteine 143/cysteine 149, cysteine 153/cysteine 176, cysteine 167/cysteine 173, cysteine 172/cysteine 198, cysteine 185/cysteine 205, cysteine 192/cysteine 224, cysteine 217/cysteine 229, cysteine 236/cysteine 286, cysteine 251/cysteine 295, cysteine 264/cysteine 274, and cysteine 281/cysteine 315. A D/ECD-tripeptide motif is present at residues 191–193 (ECD). Asparagine 296 and asparagine 305 each carry an N-linked (GlcNAc...) asparagine glycan.

Belongs to the venom metalloproteinase (M12B) family. P-III subfamily. P-IIIa sub-subfamily. Monomer. Zn(2+) is required as a cofactor. Post-translationally, N-glycosylated. In terms of processing, the N-terminus is blocked. Expressed by the venom gland.

It is found in the secreted. With respect to regulation, inhibited by EDTA, but not by PMSF. Pre-incubation with 2 mM DTT completely abolishes activity. Snake venom zinc metalloproteinase that acts as a potent hemorrhagic toxin. Hydrolyzes the insulin B chain at the 14-Ala-|-Leu-15 bond but not the 16-Tyr-|-Leu-17 bond. Degrades the alpha-chain of fibrin and hydrolyzes the Aalpha-chain of fibrinogen (FGA) while leaving the beta and gamma chains unaffected. Degrades type-I collagen and its gelatin. Degrades the alpha-1 chain of type-IV collagen and its gelatin but not the alpha-2 chain. Degrades plasma fibronectin, plasma vitronectin and basement membrane enactin. It inhibits collagen-induced platelet aggregation. The polypeptide is Zinc metalloproteinase leucurolysin-B (Bothrops leucurus (Whitetail lancehead)).